The following is a 244-amino-acid chain: MSVLDLNALNALPKVERILALAETNAKLEKLSAEERVAWALENLPGEYALSSSFGIQAAVSLHLVNQLRPDIPVILTDTGYLFPETYQFIDELTDKLKLNLKVYRAQESAAWQEARYGKLWEQGVEGIEKYNEINKVEPMNRALKELNTQTWFAGLRREQSGSRATLPVLAIQRGVFKVLPIIDWDNRTVYQYLQKHGLKYHPLWDQGYLSVGDTHTTRKWEPGMAEEETRFFGLKRECGLHEG.

Residue cysteine 239 is the Nucleophile; cysteine thiosulfonate intermediate of the active site.

Belongs to the PAPS reductase family. CysH subfamily.

The protein resides in the cytoplasm. The enzyme catalyses [thioredoxin]-disulfide + sulfite + adenosine 3',5'-bisphosphate + 2 H(+) = [thioredoxin]-dithiol + 3'-phosphoadenylyl sulfate. It functions in the pathway sulfur metabolism; hydrogen sulfide biosynthesis; sulfite from sulfate: step 3/3. Its function is as follows. Catalyzes the formation of sulfite from phosphoadenosine 5'-phosphosulfate (PAPS) using thioredoxin as an electron donor. This chain is Phosphoadenosine 5'-phosphosulfate reductase, found in Klebsiella pneumoniae (strain 342).